Consider the following 120-residue polypeptide: Small ribosomal subunit protein uS13 (120 aa).

The tract at residues 96 to 120 is disordered; that stretch reads PCRGQRTRTNARTRKGPRKAIAGKK.

It belongs to the universal ribosomal protein uS13 family. As to quaternary structure, part of the 30S ribosomal subunit. Forms a loose heterodimer with protein S19. Forms two bridges to the 50S subunit in the 70S ribosome.

Functionally, located at the top of the head of the 30S subunit, it contacts several helices of the 16S rRNA. In the 70S ribosome it contacts the 23S rRNA (bridge B1a) and protein L5 of the 50S subunit (bridge B1b), connecting the 2 subunits; these bridges are implicated in subunit movement. Contacts the tRNAs in the A and P-sites. The protein is Small ribosomal subunit protein uS13 of Chromobacterium violaceum (strain ATCC 12472 / DSM 30191 / JCM 1249 / CCUG 213 / NBRC 12614 / NCIMB 9131 / NCTC 9757 / MK).